A 312-amino-acid chain; its full sequence is HPr kinase/phosphorylase (312 aa).

Catalysis depends on residues His-139 and Lys-160. 154 to 161 (GDSGIGKS) lines the ATP pocket. Ser-161 contributes to the Mg(2+) binding site. The active-site Proton acceptor; for phosphorylation activity. Proton donor; for dephosphorylation activity is Asp-178. An important for the catalytic mechanism of both phosphorylation and dephosphorylation region spans residues 202 to 211 (IEIRGVGIID). Glu-203 is a binding site for Mg(2+). Residue Arg-244 is part of the active site. The segment at 265-270 (PVKTGR) is important for the catalytic mechanism of dephosphorylation.

It belongs to the HPrK/P family. In terms of assembly, homohexamer. Mg(2+) serves as cofactor.

The catalysed reaction is [HPr protein]-L-serine + ATP = [HPr protein]-O-phospho-L-serine + ADP + H(+). The enzyme catalyses [HPr protein]-O-phospho-L-serine + phosphate + H(+) = [HPr protein]-L-serine + diphosphate. Catalyzes the ATP- as well as the pyrophosphate-dependent phosphorylation of a specific serine residue in HPr, a phosphocarrier protein of the phosphoenolpyruvate-dependent sugar phosphotransferase system (PTS). HprK/P also catalyzes the pyrophosphate-producing, inorganic phosphate-dependent dephosphorylation (phosphorolysis) of seryl-phosphorylated HPr (P-Ser-HPr). The two antagonistic activities of HprK/P are regulated by several intracellular metabolites, which change their concentration in response to the absence or presence of rapidly metabolisable carbon sources (glucose, fructose, etc.) in the growth medium. Therefore, by controlling the phosphorylation state of HPr, HPrK/P is a sensor enzyme that plays a major role in the regulation of carbon metabolism and sugar transport: it mediates carbon catabolite repression (CCR), and regulates PTS-catalyzed carbohydrate uptake and inducer exclusion. The polypeptide is HPr kinase/phosphorylase (Streptococcus pneumoniae serotype 4 (strain ATCC BAA-334 / TIGR4)).